The primary structure comprises 660 residues: WD repeat-containing protein 48 homolog (660 aa).

8 WD repeats span residues 23–78 (MHRS…RDLH), 84–120 (HHTD…CMST), 123–162 (THRD…KLTA), 174–213 (GNKD…KLMK), 216–255 (GHTD…CISS), 258–297 (CHSE…TAQL), 300–341 (IEDA…ISVE), and 362–401 (PGAA…KVCD).

This sequence belongs to the WD repeat WDR48 family.

Functionally, regulator of deubiquitinating complexes. Activates deubiquitination by increasing the catalytic turnover without increasing the affinity of deubiquitinating enzymes for the substrate. This Brugia malayi (Filarial nematode worm) protein is WD repeat-containing protein 48 homolog.